We begin with the raw amino-acid sequence, 553 residues long: Threonylcarbamoyladenosine tRNA methylthiotransferase (553 aa).

A disordered region spans residues 21–61 (SAEDVKPQERYQNKKSVTVRAKKRVQIKPETDAEEKPTPRP). Composition is skewed to basic and acidic residues over residues 23–32 (EDVKPQERYQ) and 47–58 (IKPETDAEEKPT). An MTTase N-terminal domain is found at 72 to 179 (QKVFVKTWGC…VVEVVEETLK (108 aa)). Positions 81, 116, 145, 221, 225, and 228 each coordinate [4Fe-4S] cluster. In terms of domain architecture, Radical SAM core spans 207–438 (RKNPLIEIIS…DLFYSYEPYA (232 aa)). Residues 438–500 (AQRVGEMYTV…KFSMVGEILD (63 aa)) enclose the TRAM domain. The chain crosses the membrane as a helical span at residues 533–553 (VGIALVVGSLAFLLQLLIRFL).

The protein belongs to the methylthiotransferase family. CDKAL1 subfamily. [4Fe-4S] cluster serves as cofactor.

Its subcellular location is the membrane. It carries out the reaction N(6)-L-threonylcarbamoyladenosine(37) in tRNA + (sulfur carrier)-SH + AH2 + 2 S-adenosyl-L-methionine = 2-methylsulfanyl-N(6)-L-threonylcarbamoyladenosine(37) in tRNA + (sulfur carrier)-H + 5'-deoxyadenosine + L-methionine + A + S-adenosyl-L-homocysteine + 2 H(+). In terms of biological role, catalyzes the methylthiolation of N6-threonylcarbamoyladenosine (t(6)A), leading to the formation of 2-methylthio-N6-threonylcarbamoyladenosine (ms(2)t(6)A) at position 37 in tRNAs that read codons beginning with adenine. The chain is Threonylcarbamoyladenosine tRNA methylthiotransferase from Drosophila pseudoobscura pseudoobscura (Fruit fly).